The primary structure comprises 574 residues: MSDKKKELRSRHWYGGTHKDGFIHRSWMKNQGFPDHVFDGRPIIGICNTWSELTPCNSHLRILAEGVKRGVWEAGGFPVEFPVSSLGETQMRPTAMLFRNLLAMDVEEAIRAYGIDGVVLLGGCDKTTPGQLMGAASVDLPTIVVSSGPMLNGKWKGKDIGSGTDVWKFSEAVRAGEMSLQEFMAAESGMSRSPGVCMTMGTATTMASIVEAMGLSLPTNAALPAVDARRMALSHMTGKRIVEMVHEDLRLSKILTKENFENGIIANAAVGGSTNAVVHMLAIAGRAGIDLCLEDFDRVGGQVPCIVNCMPSGKYLIEDLAYAGGLPAVMNRIQHLLHPDAPTVFGVPISKYWEAAEVYNDDVIRPLDNPLRAAAGIRVLKGNLAPNGAVIKPSAASEHLLAHEGPAYVFDTIEDLRAKIDDPDLPVTEDTILVLKGCGPKGYPGMAEVGNMPIPRRLVEKGVRDMVRISDARMSGTAFGTVVLHVSPEANAGGPLAIVRTGDRIRLDALKGELNLLVSEEELAARMAAWQPPEQKWHRGYYKLYHDTVLQADKGADLDFLVGKSGSEVLRESH.

Positions 124 and 197 each coordinate [4Fe-4S] cluster.

Belongs to the IlvD/Edd family. Requires [4Fe-4S] cluster as cofactor.

In terms of biological role, involved in the degradation of galactose via the DeLey-Doudoroff pathway. In Rhizobium meliloti (strain 1021) (Ensifer meliloti), this protein is Putative dehydratase IlvD1 (ilvD1).